A 191-amino-acid polypeptide reads, in one-letter code: 3-isopropylmalate dehydratase small subunit (191 aa).

Belongs to the LeuD family. LeuD type 1 subfamily. As to quaternary structure, heterodimer of LeuC and LeuD.

The enzyme catalyses (2R,3S)-3-isopropylmalate = (2S)-2-isopropylmalate. Its pathway is amino-acid biosynthesis; L-leucine biosynthesis; L-leucine from 3-methyl-2-oxobutanoate: step 2/4. Catalyzes the isomerization between 2-isopropylmalate and 3-isopropylmalate, via the formation of 2-isopropylmaleate. This is 3-isopropylmalate dehydratase small subunit from Anaeromyxobacter dehalogenans (strain 2CP-C).